Consider the following 341-residue polypeptide: tRNA N6-adenosine threonylcarbamoyltransferase (341 aa).

Positions 111 and 115 each coordinate Fe cation. Residues 134-138 (LVSGG), D167, G180, and N276 each bind substrate. D304 is a binding site for Fe cation.

Belongs to the KAE1 / TsaD family. It depends on Fe(2+) as a cofactor.

The protein resides in the cytoplasm. The enzyme catalyses L-threonylcarbamoyladenylate + adenosine(37) in tRNA = N(6)-L-threonylcarbamoyladenosine(37) in tRNA + AMP + H(+). In terms of biological role, required for the formation of a threonylcarbamoyl group on adenosine at position 37 (t(6)A37) in tRNAs that read codons beginning with adenine. Is involved in the transfer of the threonylcarbamoyl moiety of threonylcarbamoyl-AMP (TC-AMP) to the N6 group of A37, together with TsaE and TsaB. TsaD likely plays a direct catalytic role in this reaction. This is tRNA N6-adenosine threonylcarbamoyltransferase from Alteromonas mediterranea (strain DSM 17117 / CIP 110805 / LMG 28347 / Deep ecotype).